The primary structure comprises 536 residues: Mannuronan C5-epimerase (536 aa).

Positions 1 to 36 are cleaved as a signal peptide; it reads MNSHASNGRSRNWPHALLESALLTSALLMASSVALA. 5 PbH1 repeats span residues 298-320, 322-345, 347-369, 371-393, and 394-416; these read TRDF…DPHD, SHGL…IISR, VDNS…VLDR, SVGN…TLYE, and SGNN…RVRN. Residue His319 is the Proton acceptor of the active site.

It belongs to the D-mannuronate C5-epimerase family.

It localises to the periplasm. The catalysed reaction is [(1-&gt;4)-beta-D-mannuronosyl](n) = [alginate](n). Its pathway is glycan biosynthesis; alginate biosynthesis. Its function is as follows. Catalyzes the epimerization of beta-D-mannuronate to alpha-L-guluronate during the synthesis of the linear polysaccharide alginate. In addition, is part of a periplasmic protein complex that protects alginate from degradation by AlgL by channeling the newly formed alginate polymer through a scaffold that transfers the alginate polymer through the periplasmic space to the outer membrane secretin AlgE. This Pseudomonas syringae pv. tomato (strain ATCC BAA-871 / DC3000) protein is Mannuronan C5-epimerase (algG).